We begin with the raw amino-acid sequence, 205 residues long: Large ribosomal subunit protein uL4 (205 aa).

Residues 53-77 (RAAVRGGGRKPWKQKGTGRARAGSI) form a disordered region. Residues 59–70 (GGRKPWKQKGTG) show a composition bias toward basic residues.

This sequence belongs to the universal ribosomal protein uL4 family. As to quaternary structure, part of the 50S ribosomal subunit.

Its function is as follows. One of the primary rRNA binding proteins, this protein initially binds near the 5'-end of the 23S rRNA. It is important during the early stages of 50S assembly. It makes multiple contacts with different domains of the 23S rRNA in the assembled 50S subunit and ribosome. Forms part of the polypeptide exit tunnel. This Acidithiobacillus ferrooxidans (strain ATCC 23270 / DSM 14882 / CIP 104768 / NCIMB 8455) (Ferrobacillus ferrooxidans (strain ATCC 23270)) protein is Large ribosomal subunit protein uL4.